A 219-amino-acid polypeptide reads, in one-letter code: Large ribosomal subunit protein uL3 (219 aa).

The segment at 113-142 is disordered; that stretch reads TTKGHGYQGNIHKDNQSRGPMAHGSRYHRR.

This sequence belongs to the universal ribosomal protein uL3 family. As to quaternary structure, part of the 50S ribosomal subunit. Forms a cluster with proteins L14 and L19.

Its function is as follows. One of the primary rRNA binding proteins, it binds directly near the 3'-end of the 23S rRNA, where it nucleates assembly of the 50S subunit. In Limosilactobacillus reuteri (strain DSM 20016) (Lactobacillus reuteri), this protein is Large ribosomal subunit protein uL3.